The sequence spans 488 residues: Protein DETOXIFICATION 35 (488 aa).

Helical transmembrane passes span 38–58, 73–93, 121–141, 150–170, 187–207, 218–238, 262–282, 296–316, 336–356, 379–401, 408–428, and 439–459; these read LWMIAAPVGFNIICQYGVSSV, AVSISLSVIGTFSFGFLLGMG, IILFVSCFFLLPIYIFATPVL, IAVPAGQFTLLTIPQLFSLAF, IAWIGFVALSLHVIMLWLFII, LAFNITNWGTAIAQIVYVIGW, IASAVMLCLEIWYMMSIIVLT, SICMNINGLEAMLFIGINAAI, VYVTVFQSLLIGLVFMVAIII, AYLLGITMVLNSVQPVVSGVAVG, VAYINLGCYYIFGLPFGYLLG, and WSGMIAGTALQTLLLLIVLYK.

It belongs to the multi antimicrobial extrusion (MATE) (TC 2.A.66.1) family. Highly expressed in inflorescence tissues, especially in floral epidermal guard cells including those of the anthers, stigma, siliques and nectaries. Also detected in the meristematic zone of the root apex and in the elongation zone through to the fully expanded cells of the differentiation zone.

The protein localises to the vacuole membrane. Multidrug and toxin efflux transporter involved in flavonoid metabolism. Required for proper reproductive development. The chain is Protein DETOXIFICATION 35 from Arabidopsis thaliana (Mouse-ear cress).